The chain runs to 218 residues: Peptide deformylase (218 aa).

Cys130 and His172 together coordinate Fe cation. Glu173 is an active-site residue. His176 is a Fe cation binding site.

This sequence belongs to the polypeptide deformylase family. The cofactor is Fe(2+).

The catalysed reaction is N-terminal N-formyl-L-methionyl-[peptide] + H2O = N-terminal L-methionyl-[peptide] + formate. Removes the formyl group from the N-terminal Met of newly synthesized proteins. Requires at least a dipeptide for an efficient rate of reaction. N-terminal L-methionine is a prerequisite for activity but the enzyme has broad specificity at other positions. The chain is Peptide deformylase from Bifidobacterium adolescentis (strain ATCC 15703 / DSM 20083 / NCTC 11814 / E194a).